The following is a 158-amino-acid chain: Endoribonuclease YbeY (158 aa).

Zn(2+) is bound by residues histidine 124, histidine 128, and histidine 134.

Belongs to the endoribonuclease YbeY family. The cofactor is Zn(2+).

It is found in the cytoplasm. In terms of biological role, single strand-specific metallo-endoribonuclease involved in late-stage 70S ribosome quality control and in maturation of the 3' terminus of the 16S rRNA. The sequence is that of Endoribonuclease YbeY from Caldicellulosiruptor saccharolyticus (strain ATCC 43494 / DSM 8903 / Tp8T 6331).